Here is a 411-residue protein sequence, read N- to C-terminus: MMP alpha-(1-&gt;4)-mannosyltransferase (411 aa).

Belongs to the glycosyltransferase group 1 family. Glycosyltransferase 4 subfamily.

The enzyme catalyses [3-O-methyl-alpha-D-mannosyl-(1-&gt;4)](n)-3-O-methyl-D-mannose + GDP-alpha-D-mannose = alpha-D-mannosyl-(1-&gt;4)-[3-O-methyl-alpha-D-mannosyl-(1-&gt;4)](n)-3-O-methyl-D-mannose + GDP + H(+). It carries out the reaction [3-O-methyl-alpha-D-mannosyl-(1-&gt;4)](n)-1-O,3-O-dimethyl-alpha-D-mannose + GDP-alpha-D-mannose = alpha-D-mannosyl-(1-&gt;4)-[3-O-methyl-alpha-D-mannosyl-(1-&gt;4)](n)-1-O,3-O-dimethyl-alpha-D-mannose + GDP + H(+). With respect to regulation, activity is significantly enhanced in the presence of Mg(2+). In terms of biological role, glycosyltransferase involved in the biosynthesis of 3-O-methylmannose polysaccharides (MMP), which are intracellular polymethylated polysaccharides implicated in the modulation of fatty acid metabolism in non-tuberculous mycobacteria. Highly specific alpha-(1-&gt;4)-mannosyltransferase that can transfer mannose units from GDP-mannose to a wide range of alpha-(1-&gt;4) oligomannosides longer than three mannoses, including all hydrolytic products of MmpH. Can use synthetic trimannosides and tetramannosides as substrates, but not mono- and disaccharides, and is significantly more active with the methylated substrates, preferring the tetramannosides over the trimannosides. This Mycolicibacterium hassiacum (strain DSM 44199 / CIP 105218 / JCM 12690 / 3849) (Mycobacterium hassiacum) protein is MMP alpha-(1-&gt;4)-mannosyltransferase.